The following is a 90-amino-acid chain: MTRAVVTVIGADRPGIVAGISSVLAEHNANIEDISQTVLRDLFAMVMLVDLSEADVSVGKLREELQKAGEELGVDVIVQHEDVYRAMHRV.

Positions 5–79 (VVTVIGADRP…EELGVDVIVQ (75 aa)) constitute an ACT domain.

It belongs to the UPF0237 family.

In Methanopyrus kandleri (strain AV19 / DSM 6324 / JCM 9639 / NBRC 100938), this protein is UPF0237 protein MK1213.